The chain runs to 181 residues: Sodium/potassium-transporting ATPase subunit beta-1-interacting protein 3 (181 aa).

Helical transmembrane passes span 2-22, 35-55, 62-82, and 152-172; these read GCCT…LSAL, APIL…FGTI, IMVY…IICF, and VQIL…SISM.

This sequence belongs to the NKAIN family. In terms of assembly, interacts with ATP1B1. In terms of tissue distribution, detected in the brain only and specifically in neurons. Expressed in multiple regions such as cerebral cortex, thalamus, hippocampus, olfactory bulb and brainstem as well as in cerebellum with low expression in granular cell layer.

It is found in the cell membrane. The protein is Sodium/potassium-transporting ATPase subunit beta-1-interacting protein 3 (Nkain3) of Mus musculus (Mouse).